The primary structure comprises 181 residues: MSANENNLIWIDLEMTGLDPERDRIIEIATLVTDANLNILAEGPTIAVHQSDAQLALMDEWNVRTHTGSGLVDRVKASTVSEHDAELATIDFLKQWVPAGKSPICGNSIGQDRRFLFKYMPQLEAYFHYRYLDVSTLKELARRWKPEILDGFKKQGTHQAMDDIRESVAELAYYREHFIKL.

One can recognise an Exonuclease domain in the interval 8 to 171; that stretch reads LIWIDLEMTG…DDIRESVAEL (164 aa). The active site involves Y129.

Belongs to the oligoribonuclease family.

It localises to the cytoplasm. 3'-to-5' exoribonuclease specific for small oligoribonucleotides. The chain is Oligoribonuclease from Klebsiella pneumoniae subsp. pneumoniae (strain ATCC 700721 / MGH 78578).